A 166-amino-acid polypeptide reads, in one-letter code: AP-3 complex subunit sigma (166 aa).

It belongs to the adaptor complexes small subunit family. Adaptor protein complex 3 (AP-3) is a heterotetramer composed of two large adaptins (delta-type subunit and beta-type subunit), a medium adaptin (mu-type subunit) and a small adaptin (sigma-type subunit).

It is found in the cytoplasm. Its subcellular location is the golgi apparatus. The protein localises to the cytoplasmic vesicle membrane. In terms of biological role, part of the AP-3 complex, an adaptor-related complex which seems to be clathrin-associated. The complex is associated with the Golgi region as well as more peripheral structures. It facilitates the budding of vesicles from the Golgi membrane and may be directly involved in trafficking to the vacuole. It also function in maintaining the identity of lytic vacuoles and in regulating the transition between storage and lytic vacuoles. The sequence is that of AP-3 complex subunit sigma from Arabidopsis thaliana (Mouse-ear cress).